A 450-amino-acid chain; its full sequence is Bifunctional protein GlmU (450 aa).

Positions 1–229 are pyrophosphorylase; the sequence is MRRHAIILAA…VEEIMGVNDR (229 aa). Residues 8 to 11, K22, Q72, and 77 to 78 contribute to the UDP-N-acetyl-alpha-D-glucosamine site; these read LAAG and GT. D102 contacts Mg(2+). Positions 139, 154, and 227 each coordinate UDP-N-acetyl-alpha-D-glucosamine. A Mg(2+)-binding site is contributed by N227. Residues 230-250 form a linker region; the sequence is VMLSQAEKAMQRRTNHYHMLN. Residues 251–450 are N-acetyltransferase; sequence GVTIIDPDST…RQTTKEGYRK (200 aa). R332 and K350 together coordinate UDP-N-acetyl-alpha-D-glucosamine. H362 (proton acceptor) is an active-site residue. UDP-N-acetyl-alpha-D-glucosamine-binding residues include Y365 and N376. Acetyl-CoA-binding positions include 385 to 386, A422, and R439; that span reads NY.

The protein in the N-terminal section; belongs to the N-acetylglucosamine-1-phosphate uridyltransferase family. This sequence in the C-terminal section; belongs to the transferase hexapeptide repeat family. In terms of assembly, homotrimer. Requires Mg(2+) as cofactor.

It localises to the cytoplasm. It catalyses the reaction alpha-D-glucosamine 1-phosphate + acetyl-CoA = N-acetyl-alpha-D-glucosamine 1-phosphate + CoA + H(+). It carries out the reaction N-acetyl-alpha-D-glucosamine 1-phosphate + UTP + H(+) = UDP-N-acetyl-alpha-D-glucosamine + diphosphate. It functions in the pathway nucleotide-sugar biosynthesis; UDP-N-acetyl-alpha-D-glucosamine biosynthesis; N-acetyl-alpha-D-glucosamine 1-phosphate from alpha-D-glucosamine 6-phosphate (route II): step 2/2. Its pathway is nucleotide-sugar biosynthesis; UDP-N-acetyl-alpha-D-glucosamine biosynthesis; UDP-N-acetyl-alpha-D-glucosamine from N-acetyl-alpha-D-glucosamine 1-phosphate: step 1/1. The protein operates within bacterial outer membrane biogenesis; LPS lipid A biosynthesis. Its function is as follows. Catalyzes the last two sequential reactions in the de novo biosynthetic pathway for UDP-N-acetylglucosamine (UDP-GlcNAc). The C-terminal domain catalyzes the transfer of acetyl group from acetyl coenzyme A to glucosamine-1-phosphate (GlcN-1-P) to produce N-acetylglucosamine-1-phosphate (GlcNAc-1-P), which is converted into UDP-GlcNAc by the transfer of uridine 5-monophosphate (from uridine 5-triphosphate), a reaction catalyzed by the N-terminal domain. This is Bifunctional protein GlmU from Staphylococcus aureus (strain USA300).